A 510-amino-acid polypeptide reads, in one-letter code: Outer spore wall protein 7 (510 aa).

The signal sequence occupies residues 1–23; that stretch reads MKAVFKVTTALLACVFIARYLVC. The tract at residues 167–195 is disordered; the sequence is FETDSETEDYEDDENENEDEDEDEDEDDV. Positions 169–195 are enriched in acidic residues; that stretch reads TDSETEDYEDDENENEDEDEDEDEDDV. Tyr-354 carries the post-translational modification Phosphotyrosine.

It belongs to the OSW/SHE family.

Functionally, involved in spore wall assembly. The protein is Outer spore wall protein 7 of Saccharomyces cerevisiae (strain ATCC 204508 / S288c) (Baker's yeast).